The following is a 124-amino-acid chain: Fluoride-specific ion channel FluC (124 aa).

The next 3 helical transmembrane spans lie at 20–40 (LLSIFMIQVFGSSFPFGTLLV), 60–80 (ISPEIKALIGIGLLGALTTFS), and 102–122 (VLLNVTLCLFMVYLGQQLIFS). Residues Gly74 and Thr77 each contribute to the Na(+) site.

Belongs to the fluoride channel Fluc/FEX (TC 1.A.43) family.

The protein localises to the cell inner membrane. The enzyme catalyses fluoride(in) = fluoride(out). With respect to regulation, na(+) is not transported, but it plays an essential structural role and its presence is essential for fluoride channel function. Functionally, fluoride-specific ion channel. Important for reducing fluoride concentration in the cell, thus reducing its toxicity. This Shewanella frigidimarina (strain NCIMB 400) protein is Fluoride-specific ion channel FluC.